The sequence spans 178 residues: Protamine-like protein (178 aa).

2 disordered regions span residues 1–27 and 77–178; these read PSTT…TVSD and SVVK…RAKK. 2 stretches are compositionally biased toward basic residues: residues 8-21 and 94-178; these read SPKR…RKRT and PRRR…RAKK. Residues 21-89 enclose the H15 domain; the sequence is TGPTVSDLIL…KAKGFYKLNK (69 aa).

Male germ cells.

Its subcellular location is the nucleus. The protein localises to the chromosome. In terms of biological role, replaces histones in the chromatin of sperm during the haploid phase of spermatogenesis. Compacts sperm DNA into a highly condensed, stable and inactive complex. The polypeptide is Protamine-like protein (Mullus surmuletus (Striped red mullet)).